The sequence spans 555 residues: ATP-dependent RNA helicase MRH4, mitochondrial (555 aa).

The transit peptide at 1-25 (MFKLLIPNKYNYVIRPLVRFKSIKS) directs the protein to the mitochondrion. The short motif at 101–108 (DIKPTPVQ) is the Q motif element. The 218-residue stretch at 144 to 361 (ANEIQKTKVF…SKLFPDQRSL (218 aa)) folds into the Helicase ATP-binding domain. An ATP-binding site is contributed by 157–164 (AETGSGKT). The short motif at 309 to 312 (DEAD) is the DEAD box element. Positions 395–555 (CLAQALYAIS…NAIIRGLRIG (161 aa)) constitute a Helicase C-terminal domain.

This sequence belongs to the DEAD box helicase family. MRH4 subfamily.

It localises to the mitochondrion. The enzyme catalyses ATP + H2O = ADP + phosphate + H(+). In terms of biological role, ATP-binding RNA helicase involved in mitochondrial RNA metabolism. Required for maintenance of mitochondrial DNA. This Candida albicans (strain SC5314 / ATCC MYA-2876) (Yeast) protein is ATP-dependent RNA helicase MRH4, mitochondrial (MRH4).